A 192-amino-acid chain; its full sequence is GTP cyclohydrolase-2 (192 aa).

50 to 54 (RLHSE) is a binding site for GTP. The Zn(2+) site is built by C55, C66, and C68. GTP-binding positions include 92–94 (EGR) and T114. The active-site Proton acceptor is the D126. R128 (nucleophile) is an active-site residue. Residues T149 and K154 each contribute to the GTP site.

The protein belongs to the GTP cyclohydrolase II family. Zn(2+) is required as a cofactor.

The catalysed reaction is GTP + 4 H2O = 2,5-diamino-6-hydroxy-4-(5-phosphoribosylamino)-pyrimidine + formate + 2 phosphate + 3 H(+). Its pathway is cofactor biosynthesis; riboflavin biosynthesis; 5-amino-6-(D-ribitylamino)uracil from GTP: step 1/4. Its function is as follows. Catalyzes the conversion of GTP to 2,5-diamino-6-ribosylamino-4(3H)-pyrimidinone 5'-phosphate (DARP), formate and pyrophosphate. The protein is GTP cyclohydrolase-2 of Helicobacter pylori (strain Shi470).